The sequence spans 198 residues: ATP-dependent Clp protease proteolytic subunit (198 aa).

Ser98 (nucleophile) is an active-site residue. His123 is an active-site residue.

It belongs to the peptidase S14 family. As to quaternary structure, fourteen ClpP subunits assemble into 2 heptameric rings which stack back to back to give a disk-like structure with a central cavity, resembling the structure of eukaryotic proteasomes.

The protein resides in the cytoplasm. The catalysed reaction is Hydrolysis of proteins to small peptides in the presence of ATP and magnesium. alpha-casein is the usual test substrate. In the absence of ATP, only oligopeptides shorter than five residues are hydrolyzed (such as succinyl-Leu-Tyr-|-NHMec, and Leu-Tyr-Leu-|-Tyr-Trp, in which cleavage of the -Tyr-|-Leu- and -Tyr-|-Trp bonds also occurs).. Functionally, cleaves peptides in various proteins in a process that requires ATP hydrolysis. Has a chymotrypsin-like activity. Plays a major role in the degradation of misfolded proteins. The protein is ATP-dependent Clp protease proteolytic subunit of Ehrlichia ruminantium (strain Welgevonden).